Here is a 150-residue protein sequence, read N- to C-terminus: 3-dehydroquinate dehydratase (150 aa).

Y26 serves as the catalytic Proton acceptor. Residues N77, H83, and D90 each contribute to the substrate site. H103 serves as the catalytic Proton donor. Substrate is bound by residues 104-105 (LS) and R114.

This sequence belongs to the type-II 3-dehydroquinase family. In terms of assembly, homododecamer.

It catalyses the reaction 3-dehydroquinate = 3-dehydroshikimate + H2O. It functions in the pathway metabolic intermediate biosynthesis; chorismate biosynthesis; chorismate from D-erythrose 4-phosphate and phosphoenolpyruvate: step 3/7. Catalyzes a trans-dehydration via an enolate intermediate. This is 3-dehydroquinate dehydratase from Pectobacterium atrosepticum (strain SCRI 1043 / ATCC BAA-672) (Erwinia carotovora subsp. atroseptica).